A 618-amino-acid polypeptide reads, in one-letter code: ADP,ATP carrier protein 2, chloroplastic (618 aa).

Residues 1–76 (MEGLIQTRGI…KERSRGFICK (76 aa)) constitute a chloroplast transit peptide. N-acetylalanine is present on Ala77. 11 helical membrane passes run 110-130 (LKKI…YTIL), 148-168 (IIPF…MLLY), 179-199 (ALFY…GFVM), 237-257 (LFYV…FWGF), 270-289 (FYPL…GRTV), 312-332 (AMMS…WWVN), 368-388 (LATL…TWKS), 401-421 (SAFM…MMLL), 441-461 (VLLL…PFAP), 464-484 (AKLG…QNIF), and 542-562 (LANS…AWLA). Residues 586–618 (RASSVKIPVVSQEDAPSGETTSQLSEKSTPTGI) are disordered. Residues 603–618 (GETTSQLSEKSTPTGI) are compositionally biased toward polar residues.

This sequence belongs to the ADP/ATP translocase tlc (TC 2.A.12.2) family.

It localises to the plastid. Its subcellular location is the chloroplast membrane. This is ADP,ATP carrier protein 2, chloroplastic (AATP2) from Arabidopsis thaliana (Mouse-ear cress).